Consider the following 886-residue polypeptide: Regulatory protein LEU3 (886 aa).

The tract at residues 1-28 is disordered; it reads MEGRSDFVATSQSGSEMSHSETRNRTGM. The span at 8–17 shows a compositional bias: polar residues; sequence VATSQSGSEM. The zn(2)-C6 fungal-type DNA-binding region spans 37-67; the sequence is CVECRQQKSKCDAHERAPEPCTKCAKKNVPC. Disordered stretches follow at residues 673-709 and 734-756; these read TAYNVDEEEEEDEDEEGEEEEEEEELSSKVPENMDSQ and PLDPNPINAGSTSSGSSLTTPNS. A compositionally biased stretch (acidic residues) spans 677–697; the sequence is VDEEEEEDEDEEGEEEEEEEE. Residues 743 to 753 show a composition bias toward low complexity; it reads GSTSSGSSLTT. Residues 874 to 882 carry the 9aaTAD motif; that stretch reads DILMNEFAF.

The protein resides in the nucleus. Functionally, factor for control of RNA levels of a group of leucine-specific genes. The protein is Regulatory protein LEU3 (LEU3) of Saccharomyces cerevisiae (strain ATCC 204508 / S288c) (Baker's yeast).